The chain runs to 279 residues: Proteasome subunit beta (279 aa).

The propeptide at 1–56 (MASQAMSWRGEGERVVRDLAAASTSSFVEHLSQSRPDLLPFGQALPAGVLPQTPHA) is removed in mature form; by autocatalysis. Residue Thr-57 is the Nucleophile of the active site.

It belongs to the peptidase T1B family. As to quaternary structure, the 20S proteasome core is composed of 14 alpha and 14 beta subunits that assemble into four stacked heptameric rings, resulting in a barrel-shaped structure. The two inner rings, each composed of seven catalytic beta subunits, are sandwiched by two outer rings, each composed of seven alpha subunits. The catalytic chamber with the active sites is on the inside of the barrel. Has a gated structure, the ends of the cylinder being occluded by the N-termini of the alpha-subunits. Is capped by the proteasome-associated ATPase, ARC.

The protein localises to the cytoplasm. The enzyme catalyses Cleavage of peptide bonds with very broad specificity.. Its pathway is protein degradation; proteasomal Pup-dependent pathway. With respect to regulation, the formation of the proteasomal ATPase ARC-20S proteasome complex, likely via the docking of the C-termini of ARC into the intersubunit pockets in the alpha-rings, may trigger opening of the gate for substrate entry. Interconversion between the open-gate and close-gate conformations leads to a dynamic regulation of the 20S proteasome proteolysis activity. Functionally, component of the proteasome core, a large protease complex with broad specificity involved in protein degradation. This chain is Proteasome subunit beta, found in Renibacterium salmoninarum (strain ATCC 33209 / DSM 20767 / JCM 11484 / NBRC 15589 / NCIMB 2235).